A 458-amino-acid chain; its full sequence is tRNA modification GTPase MnmE (458 aa).

R23, E80, and K122 together coordinate (6S)-5-formyl-5,6,7,8-tetrahydrofolate. The TrmE-type G domain occupies 218–380 (GMKIVIAGRP…LREHLQQTMG (163 aa)). N228 lines the K(+) pocket. GTP is bound by residues 228–233 (NVGKSS), 247–253 (TQIPGTT), 272–275 (DTAG), and 361–363 (SAR). S232 serves as a coordination point for Mg(2+). Residues T247, I249, and T252 each contribute to the K(+) site. Position 253 (T253) interacts with Mg(2+). K458 is a (6S)-5-formyl-5,6,7,8-tetrahydrofolate binding site.

It belongs to the TRAFAC class TrmE-Era-EngA-EngB-Septin-like GTPase superfamily. TrmE GTPase family. In terms of assembly, homodimer. Heterotetramer of two MnmE and two MnmG subunits. The cofactor is K(+).

Its subcellular location is the cytoplasm. Its function is as follows. Exhibits a very high intrinsic GTPase hydrolysis rate. Involved in the addition of a carboxymethylaminomethyl (cmnm) group at the wobble position (U34) of certain tRNAs, forming tRNA-cmnm(5)s(2)U34. This chain is tRNA modification GTPase MnmE, found in Hamiltonella defensa subsp. Acyrthosiphon pisum (strain 5AT).